The sequence spans 190 residues: MIGRITGTLIEKSPPVVCVDVNGVGYEIDVPMSTLYALPETGARVTLFTHLVVREDAQLLYGFGSSAERSTFRELIKVTGIGARTALAVLSGLSVAELSQAITLQETGRLTRVPGIGKKTAERLLLEMRGKLGADIGATPHAASGHQSDILNALLALGYSDKESQAALKKLPDGVDVSEGIRLALKALVR.

Residues 1–64 (MIGRITGTLI…EDAQLLYGFG (64 aa)) form a domain I region. The tract at residues 65–137 (SSAERSTFRE…MRGKLGADIG (73 aa)) is domain II. A flexible linker region spans residues 137–141 (GATPH). The segment at 142-190 (AASGHQSDILNALLALGYSDKESQAALKKLPDGVDVSEGIRLALKALVR) is domain III.

Belongs to the RuvA family. In terms of assembly, homotetramer. Forms an RuvA(8)-RuvB(12)-Holliday junction (HJ) complex. HJ DNA is sandwiched between 2 RuvA tetramers; dsDNA enters through RuvA and exits via RuvB. An RuvB hexamer assembles on each DNA strand where it exits the tetramer. Each RuvB hexamer is contacted by two RuvA subunits (via domain III) on 2 adjacent RuvB subunits; this complex drives branch migration. In the full resolvosome a probable DNA-RuvA(4)-RuvB(12)-RuvC(2) complex forms which resolves the HJ.

The protein resides in the cytoplasm. Functionally, the RuvA-RuvB-RuvC complex processes Holliday junction (HJ) DNA during genetic recombination and DNA repair, while the RuvA-RuvB complex plays an important role in the rescue of blocked DNA replication forks via replication fork reversal (RFR). RuvA specifically binds to HJ cruciform DNA, conferring on it an open structure. The RuvB hexamer acts as an ATP-dependent pump, pulling dsDNA into and through the RuvAB complex. HJ branch migration allows RuvC to scan DNA until it finds its consensus sequence, where it cleaves and resolves the cruciform DNA. The polypeptide is Holliday junction branch migration complex subunit RuvA (Bordetella pertussis (strain Tohama I / ATCC BAA-589 / NCTC 13251)).